Consider the following 258-residue polypeptide: Steroid 5-alpha-reductase DET2 (258 aa).

A run of 6 helical transmembrane segments spans residues 8-28 (FHYCLLTLYIIALPTWISLYF), 49-69 (LAWFLMESPTLWLTFFLFPSG), 77-97 (SFLLISPFLFHYFNRTVLYPL), 109-129 (FPVSVAFMAFGFNLLNGYLQA), 144-164 (LFWWRFLAGLLIFVVGMWVNV), and 201-221 (IMEWFGWAVMTWSWVGFGFFL).

Belongs to the steroid 5-alpha reductase family. As to expression, accumulates in fibers (seed trichomes) during both their initiation and elongation phases. Also present in roots, hypocotyls, leaves, flowers and ovules, and barely in cotyledons.

Its subcellular location is the membrane. It catalyses the reaction a 3-oxo-5alpha-steroid + NADP(+) = a 3-oxo-Delta(4)-steroid + NADPH + H(+). It participates in plant hormone biosynthesis; brassinosteroid biosynthesis. In terms of biological role, involved in a reduction step in the biosynthesis of the plant steroid, brassinolide (BL). Promotes cotton fibers (seed trichomes) initiation and elongation. This Gossypium hirsutum (Upland cotton) protein is Steroid 5-alpha-reductase DET2.